The primary structure comprises 500 residues: Chromosomal replication initiator protein DnaA (500 aa).

The interval 1 to 81 (MVNASGDPVI…LQALRTVTGE (81 aa)) is domain I, interacts with DnaA modulators. The domain II stretch occupies residues 81-155 (ENMFPAFKVV…QQKMNRDPET (75 aa)). Residues 156-377 (HLNKNFTFDS…GALTRVTAVA (222 aa)) form a domain III, AAA+ region region. ATP-binding residues include G200, G202, K203, and T204. The tract at residues 378 to 500 (SLSNQPVTRA…TVRLKQSNTN (123 aa)) is domain IV, binds dsDNA.

Belongs to the DnaA family. As to quaternary structure, oligomerizes as a right-handed, spiral filament on DNA at oriC.

Its subcellular location is the cytoplasm. Functionally, plays an essential role in the initiation and regulation of chromosomal replication. ATP-DnaA binds to the origin of replication (oriC) to initiate formation of the DNA replication initiation complex once per cell cycle. Binds the DnaA box (a 9 base pair repeat at the origin) and separates the double-stranded (ds)DNA. Forms a right-handed helical filament on oriC DNA; dsDNA binds to the exterior of the filament while single-stranded (ss)DNA is stabiized in the filament's interior. The ATP-DnaA-oriC complex binds and stabilizes one strand of the AT-rich DNA unwinding element (DUE), permitting loading of DNA polymerase. After initiation quickly degrades to an ADP-DnaA complex that is not apt for DNA replication. Binds acidic phospholipids. The protein is Chromosomal replication initiator protein DnaA of Bifidobacterium longum (strain DJO10A).